A 495-amino-acid chain; its full sequence is tRNA modification GTPase MnmE (495 aa).

(6S)-5-formyl-5,6,7,8-tetrahydrofolate-binding residues include R28, E89, and K128. Positions G223–H417 constitute a TrmE-type G domain. N233 serves as a coordination point for K(+). GTP contacts are provided by residues N233 to S238, S252 to T258, and D277 to G280. S237 contributes to the Mg(2+) binding site. K(+) is bound by residues S252, V254, and T257. T258 serves as a coordination point for Mg(2+). Residue K495 participates in (6S)-5-formyl-5,6,7,8-tetrahydrofolate binding.

Belongs to the TRAFAC class TrmE-Era-EngA-EngB-Septin-like GTPase superfamily. TrmE GTPase family. As to quaternary structure, homodimer. Heterotetramer of two MnmE and two MnmG subunits. K(+) serves as cofactor.

It localises to the cytoplasm. Functionally, exhibits a very high intrinsic GTPase hydrolysis rate. Involved in the addition of a carboxymethylaminomethyl (cmnm) group at the wobble position (U34) of certain tRNAs, forming tRNA-cmnm(5)s(2)U34. The polypeptide is tRNA modification GTPase MnmE (Treponema pallidum (strain Nichols)).